Here is a 290-residue protein sequence, read N- to C-terminus: UPF0761 membrane protein YihY (290 aa).

6 helical membrane passes run 44 to 64 (LLSLVPLVAVVFALFAAFPMF), 104 to 124 (VGACGLIVTALLLMYSIDSAL), 140 to 160 (FAVYWMILTLGPLLAGASLAI), 183 to 203 (IFPLLLSWISFWLLYSIVPTI), 210 to 230 (AIVGAFVAALLFEAGKKGFAL), and 244 to 264 (VLAVIPILFVWVYWTWCIVLL).

It belongs to the UPF0761 family.

The protein resides in the cell inner membrane. This Shigella sonnei (strain Ss046) protein is UPF0761 membrane protein YihY.